The sequence spans 172 residues: Large ribosomal subunit protein uL10 (172 aa).

It belongs to the universal ribosomal protein uL10 family. As to quaternary structure, part of the ribosomal stalk of the 50S ribosomal subunit. The N-terminus interacts with L11 and the large rRNA to form the base of the stalk. The C-terminus forms an elongated spine to which L12 dimers bind in a sequential fashion forming a multimeric L10(L12)X complex.

In terms of biological role, forms part of the ribosomal stalk, playing a central role in the interaction of the ribosome with GTP-bound translation factors. The chain is Large ribosomal subunit protein uL10 (rplJ) from Liberibacter africanus subsp. capensis.